The primary structure comprises 291 residues: N-acetylmannosamine kinase (291 aa).

ATP contacts are provided by residues 5-12 (AIDIGGTK) and 132-139 (GVGGGVVC). Zn(2+)-binding residues include His156, Cys166, Cys168, and Cys173.

Belongs to the ROK (NagC/XylR) family. NanK subfamily. In terms of assembly, homodimer.

It carries out the reaction an N-acyl-D-mannosamine + ATP = an N-acyl-D-mannosamine 6-phosphate + ADP + H(+). It participates in amino-sugar metabolism; N-acetylneuraminate degradation; D-fructose 6-phosphate from N-acetylneuraminate: step 2/5. Functionally, catalyzes the phosphorylation of N-acetylmannosamine (ManNAc) to ManNAc-6-P. This is N-acetylmannosamine kinase from Salmonella typhi.